Here is a 634-residue protein sequence, read N- to C-terminus: Probable threonine--tRNA ligase, cytoplasmic (634 aa).

The TGS domain maps to 1-61 (MSIYVTFKGQ…NENQKIELYD (61 aa)).

The protein belongs to the class-II aminoacyl-tRNA synthetase family.

The protein localises to the cytoplasm. It catalyses the reaction tRNA(Thr) + L-threonine + ATP = L-threonyl-tRNA(Thr) + AMP + diphosphate + H(+). This Enterocytozoon bieneusi (strain H348) (Microsporidian parasite) protein is Probable threonine--tRNA ligase, cytoplasmic.